Reading from the N-terminus, the 357-residue chain is Endo-1,4-beta-xylanase Xyn11B (357 aa).

The N-terminal stretch at 1–27 is a signal peptide; that stretch reads MKIFQNTKNVIVSIAWAAALCTSAVSA. In terms of domain architecture, GH11 spans 29 to 226; it reads TLTSNSTGTN…SRGSSDITVS (198 aa). Residue E116 is the Nucleophile of the active site. Catalysis depends on E213, which acts as the Proton donor. The disordered stretch occupies residues 220–245; the sequence is SSDITVSQGGSSGGGNSSSSSSASGG.

It belongs to the glycosyl hydrolase 11 (cellulase G) family.

Its subcellular location is the secreted. The catalysed reaction is Endohydrolysis of (1-&gt;4)-beta-D-xylosidic linkages in xylans.. It functions in the pathway glycan degradation; xylan degradation. Functionally, endo-acting xylanase which specifically cleaves internal linkages on the xylan backbone, releasing xylooligosaccharides. Is able to hydrolyze glucuronoxylan and the arabinoxylan from wheat. The polypeptide is Endo-1,4-beta-xylanase Xyn11B (xyn11B) (Cellvibrio japonicus (Pseudomonas fluorescens subsp. cellulosa)).